We begin with the raw amino-acid sequence, 245 residues long: 5-oxoprolinase subunit A (245 aa).

Belongs to the LamB/PxpA family. As to quaternary structure, forms a complex composed of PxpA, PxpB and PxpC.

The catalysed reaction is 5-oxo-L-proline + ATP + 2 H2O = L-glutamate + ADP + phosphate + H(+). Catalyzes the cleavage of 5-oxoproline to form L-glutamate coupled to the hydrolysis of ATP to ADP and inorganic phosphate. The protein is 5-oxoprolinase subunit A of Neisseria meningitidis serogroup A / serotype 4A (strain DSM 15465 / Z2491).